We begin with the raw amino-acid sequence, 620 residues long: MKQSKMLIPTLREMPSDAQVISHALMVRAGYVRQVSAGIYAYMPLANRAIEKFKTIMREEFEKIGAVEMLAPALLTADLWRESGRYETYGEDLYKLKNRDKSDFILGPTHEETFTVLVRDAVKSYKQLPLNLYQIQSKYRDEKRPRNGLLRTREFIMKDAYSFHQNYEDLDVTYEDYRKAYEAIFTRAGLEFKAIIGDGGAMGGKDSQEFMAVTPERTDLNRWVVLDKSIASLDEIPEDVMEEIKNELTSWLVAGEDTIAYSTESSYAANLEMATNAYTPATKVVTQEEVSRVETPGCKSIDDVAAFLNIPEEQTIKTLLFTADDEPVVALLVGNDQVNDVKLKNYLAADFLKPATEDEARQVFGANFGSLGPVNLPENVRIIADRKVQDVANAVVGANEDGYHLTGVNPERDFKAEYVDIRKVKEGEISPDGQGVLQFARGIEIGHIFKLGTRYSESMGANVLDENGRAVPIIMGCYGIGVSRILSAVIEQHARLFVNKTPKGQYRYAWGINFPKELAPYDVHLITVNTKDEEANALTDRLEAALAAEGYDVLIDDRNERVGSKFSDSDLIGLPIRVTVGKKASEGVVEVKIKATGDTIEVNADNLIETLAILTTEQDA.

It belongs to the class-II aminoacyl-tRNA synthetase family. ProS type 1 subfamily. As to quaternary structure, homodimer.

The protein localises to the cytoplasm. The enzyme catalyses tRNA(Pro) + L-proline + ATP = L-prolyl-tRNA(Pro) + AMP + diphosphate. In terms of biological role, catalyzes the attachment of proline to tRNA(Pro) in a two-step reaction: proline is first activated by ATP to form Pro-AMP and then transferred to the acceptor end of tRNA(Pro). As ProRS can inadvertently accommodate and process non-cognate amino acids such as alanine and cysteine, to avoid such errors it has two additional distinct editing activities against alanine. One activity is designated as 'pretransfer' editing and involves the tRNA(Pro)-independent hydrolysis of activated Ala-AMP. The other activity is designated 'posttransfer' editing and involves deacylation of mischarged Ala-tRNA(Pro). The misacylated Cys-tRNA(Pro) is not edited by ProRS. This is Proline--tRNA ligase from Streptococcus thermophilus (strain CNRZ 1066).